We begin with the raw amino-acid sequence, 397 residues long: B3 domain-containing protein At4g34400 (397 aa).

The segment at residues 14-107 (PRFFTVFVSH…IFEVSIFRGY (94 aa)) is a DNA-binding region (TF-B3). Positions 118 to 255 (ELEEEEEDSV…SSYAPDKEDT (138 aa)) are disordered. Positions 137–160 (TGAKSEMKNTVPEGRDKGKSKVEV) are enriched in basic and acidic residues. Acidic residues-rich tracts occupy residues 161–186 (VEDS…TDTD), 212–227 (SSDD…DSDY), and 235–246 (DIEENSISEEDS).

It is found in the nucleus. The sequence is that of B3 domain-containing protein At4g34400 from Arabidopsis thaliana (Mouse-ear cress).